A 426-amino-acid polypeptide reads, in one-letter code: Enolase (426 aa).

Residue Q162 participates in (2R)-2-phosphoglycerate binding. E204 (proton donor) is an active-site residue. Mg(2+) contacts are provided by D241, E288, and D315. 4 residues coordinate (2R)-2-phosphoglycerate: K340, R369, S370, and K391. Residue K340 is the Proton acceptor of the active site.

Belongs to the enolase family. The cofactor is Mg(2+).

It localises to the cytoplasm. The protein localises to the secreted. The protein resides in the cell surface. The catalysed reaction is (2R)-2-phosphoglycerate = phosphoenolpyruvate + H2O. It functions in the pathway carbohydrate degradation; glycolysis; pyruvate from D-glyceraldehyde 3-phosphate: step 4/5. Functionally, catalyzes the reversible conversion of 2-phosphoglycerate (2-PG) into phosphoenolpyruvate (PEP). It is essential for the degradation of carbohydrates via glycolysis. The polypeptide is Enolase (Bacteroides thetaiotaomicron (strain ATCC 29148 / DSM 2079 / JCM 5827 / CCUG 10774 / NCTC 10582 / VPI-5482 / E50)).